The sequence spans 198 residues: 3-isopropylmalate dehydratase small subunit (198 aa).

The protein belongs to the LeuD family. LeuD type 1 subfamily. In terms of assembly, heterodimer of LeuC and LeuD.

It catalyses the reaction (2R,3S)-3-isopropylmalate = (2S)-2-isopropylmalate. It functions in the pathway amino-acid biosynthesis; L-leucine biosynthesis; L-leucine from 3-methyl-2-oxobutanoate: step 2/4. Functionally, catalyzes the isomerization between 2-isopropylmalate and 3-isopropylmalate, via the formation of 2-isopropylmaleate. The protein is 3-isopropylmalate dehydratase small subunit of Corynebacterium jeikeium (strain K411).